A 1390-amino-acid polypeptide reads, in one-letter code: MTMPQTDGVEFASRNNLENGDGDQVRSQWVAIERSPTCKRITTALFCKRDEQGKRSQRRVMDVSKLEDLDRRLFIDELIRHVEDDNRVLLQKIRTRTDEVGIDLPKIEVRFSDLFVEAECEVVHGKPIPTLWNAIASKLSRFTFSKQEDKISILKGVSGIIRPKRMTLLLGPPGCGKTTLLLALSGRLDPSLKTRGEVSYNGHLFSEFVPEKTSSYVSQNDLHIPELSVRETLDFSGCFQGAGSRLEMMKEISRREKLKGIVPDPDIDAYMKAASIEGSKTNLQTDYILKILGLTICADTRVGDASRPGISGGQKRRLTTGEMIVGPIKTLFMDEISNGLDSSTTFQILSCLQQFARLSEGTILVSLLQPAPETFELFDDLILMGEGKIIYHGPRDFICSFFEDCGFKCPQRKSVAEFLQEVISRKDQEQYWCHRDKPYCYVSIDSFIEKFKKSDLGLQLQDELSKTYDKSQTQKDGLCIRKYSLSNWDMFKACSRREFLLMKRNSFVYVFKSGLLIFIGSIAMTVYLRTGSTRDSLHANYLLGSLFFSLIKLLADGLPELTLTVSRIAVFCKQKELYFYPAWAYAIPSAILKIPISFLESFLWTMLTYYVIGYSPEAGRFIRQVLILFALHLSCISMFRAIGAVFRDFDVATTIGSISIVLLSVFGGFIVRKPSMPSWLEWGFWLSPLSYAEIGLTSNEFFAPMWRKMTSENRTLGEQVLDARGLNFGNQSYWNAFGALIGFTLFFNTVFALALTFLKTSQRSRVIVSHDKNTQSSEKDSKIASHSKNALPFEPLTFTFQDVQYFIETPQGKKLQLLSDVTGAFKPGVLTALMGVSGAGKTTLLDVLSGRKTRGDIKGQIEVGGYVKVQDTFSRVSGYCEQFDIHSPNLTVQESLKYSAWLRLPCNISSETKSAIVNEVLETIELEEIKDSLVGVPGISGVTAEQRKRLTIAVELVSNPSIIFMDEPTTGLDARAAAIVMRAVKNIAETGRTVVCTIHQPSIDIFEAFDELILMKNGGKIIYYGPLGQHSSKVIEYFMSIPGVPKLKENSNPATWILDITSKSSEDKLGVDLAHIYEESTLFKENKMVIEQTRCTSLGSERLILSSRYAQTSWEQFKACLWKQHLSYWRNPSYNLTRIIFMCFTCMLCGILFLQKAKEINNQQDLFNVFGSMFTVVLFSGINNCSTVIFCVATERNVFYRERFSRMYNPWAYSLAQVLVEIPYSLFQSIIYVIIVYPMVGYHWSVYKVFWSFYSIFCSLLIFNYFGMLLVVVTPNVHIAFTLRSSFYAIVNLFAGYVMPKPNIPRWWIWMYYLSPTSWVLNGLLTSQYGDMEKEILAFGEKKKVSAFLEDYFGYRYDSLALVAVVLIAFPILLASLFAFFIGKLNFQKK.

Residues 1 to 22 (MTMPQTDGVEFASRNNLENGDG) form a disordered region. In terms of domain architecture, ABC transporter 1 spans 137–411 (SKLSRFTFSK…FEDCGFKCPQ (275 aa)). Residue 171 to 178 (GPPGCGKT) participates in ATP binding. Positions 489-701 (DMFKACSRRE…AEIGLTSNEF (213 aa)) constitute an ABC transmembrane type-2 1 domain. Helical transmembrane passes span 507-527 (FVYV…MTVY), 541-561 (YLLG…LPEL), 594-614 (IPIS…VIGY), 626-646 (LILF…GAVF), 651-671 (VATT…GFIV), and 737-757 (FGAL…ALTF). One can recognise an ABC transporter 2 domain in the interval 798–1043 (FTFQDVQYFI…VIEYFMSIPG (246 aa)). 835–842 (GVSGAGKT) is an ATP binding site. Residues 1115–1329 (EQFKACLWKQ…VLNGLLTSQY (215 aa)) enclose the ABC transmembrane type-2 2 domain. Transmembrane regions (helical) follow at residues 1134–1154 (YNLT…ILFL), 1173–1193 (MFTV…FCVA), 1218–1238 (VLVE…IVYP), 1253–1273 (FYSI…LVVV), 1279–1299 (IAFT…GYVM), 1307–1327 (WWIW…LLTS), and 1362–1382 (LVAV…AFFI).

The protein belongs to the ABC transporter superfamily. ABCG family. PDR (TC 3.A.1.205) subfamily.

The protein localises to the membrane. May be a general defense protein. This Arabidopsis thaliana (Mouse-ear cress) protein is ABC transporter G family member 43 (ABCG43).